The primary structure comprises 241 residues: Putative lipoprotein YvcA (241 aa).

An N-terminal signal peptide occupies residues 1–18; sequence MKKIIFICFSLLLALTGG. Cys-19 carries N-palmitoyl cysteine lipidation. Cys-19 carries the S-diacylglycerol cysteine lipid modification. A disordered region spans residues 22–48; the sequence is NDNDKNSTNDNKTEAVKPKDMDPKDLP. Positions 23–46 are enriched in basic and acidic residues; sequence DNDKNSTNDNKTEAVKPKDMDPKD.

It localises to the cell membrane. Required for complex colony architecture. This chain is Putative lipoprotein YvcA (yvcA), found in Bacillus subtilis (strain 168).